Consider the following 222-residue polypeptide: 6,7-dimethyl-8-ribityllumazine synthase, chloroplastic (222 aa).

The N-terminal 66 residues, 1–66 (MASFAASQTC…NRASFVVTNA (66 aa)), are a transit peptide targeting the chloroplast. Residues phenylalanine 89, 122–124 (AYE), and 146–148 (AVV) contribute to the 5-amino-6-(D-ribitylamino)uracil site. 151 to 152 (DT) provides a ligand contact to (2S)-2-hydroxy-3-oxobutyl phosphate. Histidine 154 acts as the Proton donor in catalysis. Phenylalanine 179 serves as a coordination point for 5-amino-6-(D-ribitylamino)uracil. Arginine 193 contacts (2S)-2-hydroxy-3-oxobutyl phosphate.

This sequence belongs to the DMRL synthase family. Oligomer forming an icosahedral capsid.

It localises to the plastid. It is found in the chloroplast. The enzyme catalyses (2S)-2-hydroxy-3-oxobutyl phosphate + 5-amino-6-(D-ribitylamino)uracil = 6,7-dimethyl-8-(1-D-ribityl)lumazine + phosphate + 2 H2O + H(+). It participates in cofactor biosynthesis; riboflavin biosynthesis; riboflavin from 2-hydroxy-3-oxobutyl phosphate and 5-amino-6-(D-ribitylamino)uracil: step 1/2. Its function is as follows. Catalyzes the formation of 6,7-dimethyl-8-ribityllumazine by condensation of 5-amino-6-(D-ribitylamino)uracil with 3,4-dihydroxy-2-butanone 4-phosphate. This is the penultimate step in the biosynthesis of riboflavin. This chain is 6,7-dimethyl-8-ribityllumazine synthase, chloroplastic, found in Spinacia oleracea (Spinach).